The chain runs to 341 residues: Anthranilate phosphoribosyltransferase (341 aa).

Residues Gly-79, Gly-82–Asp-83, Thr-87, Asn-89–Thr-92, Lys-107–Ser-115, and Ser-119 contribute to the 5-phospho-alpha-D-ribose 1-diphosphate site. An anthranilate-binding site is contributed by Gly-79. Mg(2+) is bound at residue Ser-91. Asn-110 contacts anthranilate. Residue Arg-165 participates in anthranilate binding. Residues Asp-224 and Glu-225 each contribute to the Mg(2+) site.

The protein belongs to the anthranilate phosphoribosyltransferase family. Homodimer. Requires Mg(2+) as cofactor.

It carries out the reaction N-(5-phospho-beta-D-ribosyl)anthranilate + diphosphate = 5-phospho-alpha-D-ribose 1-diphosphate + anthranilate. The protein operates within amino-acid biosynthesis; L-tryptophan biosynthesis; L-tryptophan from chorismate: step 2/5. In terms of biological role, catalyzes the transfer of the phosphoribosyl group of 5-phosphorylribose-1-pyrophosphate (PRPP) to anthranilate to yield N-(5'-phosphoribosyl)-anthranilate (PRA). This is Anthranilate phosphoribosyltransferase from Bacillus cereus (strain G9842).